The primary structure comprises 261 residues: Triosephosphate isomerase (261 aa).

Residue Asn10 to Lys12 coordinates substrate. The active-site Electrophile is His100. Glu172 (proton acceptor) is an active-site residue. Substrate is bound by residues Gly178, Ser218, and Gly239–Gly240.

The protein belongs to the triosephosphate isomerase family. As to quaternary structure, homodimer.

The protein resides in the cytoplasm. It catalyses the reaction D-glyceraldehyde 3-phosphate = dihydroxyacetone phosphate. It participates in carbohydrate biosynthesis; gluconeogenesis. Its pathway is carbohydrate degradation; glycolysis; D-glyceraldehyde 3-phosphate from glycerone phosphate: step 1/1. Involved in the gluconeogenesis. Catalyzes stereospecifically the conversion of dihydroxyacetone phosphate (DHAP) to D-glyceraldehyde-3-phosphate (G3P). In Mycobacterium leprae (strain TN), this protein is Triosephosphate isomerase.